We begin with the raw amino-acid sequence, 80 residues long: Small ribosomal subunit protein uS17 (80 aa).

It belongs to the universal ribosomal protein uS17 family. In terms of assembly, part of the 30S ribosomal subunit.

One of the primary rRNA binding proteins, it binds specifically to the 5'-end of 16S ribosomal RNA. This is Small ribosomal subunit protein uS17 from Chelativorans sp. (strain BNC1).